The primary structure comprises 351 residues: Transcription elongation factor A N-terminal and central domain-containing protein (351 aa).

One can recognise a TFIIS N-terminal domain in the interval 5-82 (NQIAARASLI…SKWKAVYKQT (78 aa)). Disordered regions lie at residues 86–119 (ARNSPKLFPVRGNKEENSGPSHDPSQNETLGICS) and 144–169 (LKPKEEHFGDGDPESTGKRSSELLDP). A compositionally biased stretch (polar residues) spans 103 to 119 (SGPSHDPSQNETLGICS). Basic and acidic residues predominate over residues 145–165 (KPKEEHFGDGDPESTGKRSSE). Residues 173–289 (MRTKCIELLY…EHYLPQVIDG (117 aa)) enclose the TFIIS central domain.

The sequence is that of Transcription elongation factor A N-terminal and central domain-containing protein (TCEANC) from Homo sapiens (Human).